The primary structure comprises 265 residues: Phosphatidylglycerol--prolipoprotein diacylglyceryl transferase (265 aa).

Helical transmembrane passes span Val10–Ile30, Leu56–Tyr76, Leu87–Leu107, and Gly117–Ala137. Arg139 contacts a 1,2-diacyl-sn-glycero-3-phospho-(1'-sn-glycerol). 3 consecutive transmembrane segments (helical) span residues Pro172–Tyr192, Met200–Val220, and Leu227–Leu247.

It belongs to the Lgt family.

It is found in the cell inner membrane. The catalysed reaction is L-cysteinyl-[prolipoprotein] + a 1,2-diacyl-sn-glycero-3-phospho-(1'-sn-glycerol) = an S-1,2-diacyl-sn-glyceryl-L-cysteinyl-[prolipoprotein] + sn-glycerol 1-phosphate + H(+). The protein operates within protein modification; lipoprotein biosynthesis (diacylglyceryl transfer). Catalyzes the transfer of the diacylglyceryl group from phosphatidylglycerol to the sulfhydryl group of the N-terminal cysteine of a prolipoprotein, the first step in the formation of mature lipoproteins. The protein is Phosphatidylglycerol--prolipoprotein diacylglyceryl transferase of Azotobacter vinelandii (strain DJ / ATCC BAA-1303).